Here is a 200-residue protein sequence, read N- to C-terminus: Large ribosomal subunit protein uL4 (200 aa).

The tract at residues 43 to 71 (RAQKTRAEVSGSGKKPWRQKGTGRARSGD) is disordered.

Belongs to the universal ribosomal protein uL4 family. Part of the 50S ribosomal subunit.

One of the primary rRNA binding proteins, this protein initially binds near the 5'-end of the 23S rRNA. It is important during the early stages of 50S assembly. It makes multiple contacts with different domains of the 23S rRNA in the assembled 50S subunit and ribosome. In terms of biological role, forms part of the polypeptide exit tunnel. The protein is Large ribosomal subunit protein uL4 of Histophilus somni (strain 2336) (Haemophilus somnus).